Reading from the N-terminus, the 131-residue chain is Large ribosomal subunit protein bL17 (131 aa).

This sequence belongs to the bacterial ribosomal protein bL17 family. As to quaternary structure, part of the 50S ribosomal subunit. Contacts protein L32.

The protein is Large ribosomal subunit protein bL17 of Shewanella oneidensis (strain ATCC 700550 / JCM 31522 / CIP 106686 / LMG 19005 / NCIMB 14063 / MR-1).